The following is a 459-amino-acid chain: Antizyme inhibitor 2 (459 aa).

A necessary for polyamine uptake stimulation region spans residues 117–140 (QVAQIKYAAKHGVRLLSFDNEVEL).

This sequence belongs to the Orn/Lys/Arg decarboxylase class-II family. ODC antizyme inhibitor subfamily. Monomer. Interacts with OAZ1, OAZ2 and OAZ3; this interaction disrupts the interaction between the antizyme and ODC1. Does not form a heterodimer with ODC1. Post-translationally, ubiquitinated, leading to its proteasomal degradation; a process that is reduced in presence of antizymes. May also be degraded through the lysosomal degradative pathway in a proteasomal-independent manner. As to expression, expressed in the medulla and chromaffin cells of the adrenal gland. Expressed in the Langerhans islets of the pancreas. Expressed in the inner part of the seminiferous tubules and in spermatozoa located in the lumen of the epididymis of the testis. Expressed in the cortex, hippocampus and cerebellum of the brain. Expressed in normal and neoplastic mast cells (MC) (at protein level). Expressed in testis, pancreas and brain. Expressed throughout the differentiation process from spermatids to spermatozoa in the inner part of the seminiferous tubules. Expressed in the kidney: expressed in the superficial (Cs) and the deep layer (Cd) of the cortex region and in the outer stripe (OS), inner stripe (IS) and the inner medulla papilla (IM) of the medulla region.

Its subcellular location is the nucleus. The protein resides in the cytoplasm. It is found in the perinuclear region. The protein localises to the membrane. It localises to the cytoplasmic vesicle. Its subcellular location is the endoplasmic reticulum-Golgi intermediate compartment. The protein resides in the golgi apparatus. It is found in the cis-Golgi network. The protein localises to the trans-Golgi network. It localises to the cytoplasmic granule. Its subcellular location is the cell projection. The protein resides in the axon. It is found in the dendrite. The protein localises to the perikaryon. Its function is as follows. Antizyme inhibitor (AZI) protein that positively regulates ornithine decarboxylase (ODC) activity and polyamine uptake. AZI is an enzymatically inactive ODC homolog that counteracts the negative effect of ODC antizymes (AZs) OAZ1, OAZ2 and OAZ3 on ODC activity by competing with ODC for antizyme-binding. Inhibits antizyme-dependent ODC degradation and releases ODC monomers from their inactive complex with antizymes, leading to formation of the catalytically active ODC homodimer and restoring polyamine production. Participates in the morphological integrity of the trans-Golgi network (TGN) and functions as a regulator of intracellular secretory vesicle trafficking. This is Antizyme inhibitor 2 (Azin2) from Mus musculus (Mouse).